The primary structure comprises 439 residues: Ribosomal protein uS12 methylthiotransferase RimO (439 aa).

In terms of domain architecture, MTTase N-terminal spans 1–117 (MNIGFISLGC…IAGVVNRIAQ (117 aa)). Residues Cys-10, Cys-46, Cys-80, Cys-154, Cys-158, and Cys-161 each contribute to the [4Fe-4S] cluster site. Residues 140-370 (TTPPGSAYLK…LRLQQKITRQ (231 aa)) form the Radical SAM core domain. A TRAM domain is found at 373 to 439 (LARINTQEKV…RNYDMIGEYQ (67 aa)).

This sequence belongs to the methylthiotransferase family. RimO subfamily. [4Fe-4S] cluster is required as a cofactor.

Its subcellular location is the cytoplasm. The catalysed reaction is L-aspartate(89)-[ribosomal protein uS12]-hydrogen + (sulfur carrier)-SH + AH2 + 2 S-adenosyl-L-methionine = 3-methylsulfanyl-L-aspartate(89)-[ribosomal protein uS12]-hydrogen + (sulfur carrier)-H + 5'-deoxyadenosine + L-methionine + A + S-adenosyl-L-homocysteine + 2 H(+). Its function is as follows. Catalyzes the methylthiolation of an aspartic acid residue of ribosomal protein uS12. The chain is Ribosomal protein uS12 methylthiotransferase RimO from Syntrophomonas wolfei subsp. wolfei (strain DSM 2245B / Goettingen).